The sequence spans 74 residues: U5-theraphotoxin-Cg1a (74 aa).

A signal peptide spans 1-19 (MNATIFALLLLLNLAMYNA). A propeptide spanning residues 20–39 (AEQSSETDMDDTLLIPENYR) is cleaved from the precursor. 3 disulfide bridges follow: cysteine 42-cysteine 56, cysteine 49-cysteine 61, and cysteine 55-cysteine 71.

Belongs to the neurotoxin 36 family. 01 subfamily. Expressed by the venom gland.

The protein localises to the secreted. Functionally, probable ion channel inhibitor. The chain is U5-theraphotoxin-Cg1a from Chilobrachys guangxiensis (Chinese earth tiger tarantula).